The chain runs to 310 residues: Epoxyqueuosine reductase (310 aa).

The active-site Proton donor is the D133. One can recognise a 4Fe-4S ferredoxin-type domain in the interval 179–208; it reads YDNPSDKDYCGTCTRCVDACPTDAILQDNL. Residues C188, C191, C194, C198, C214, C241, C244, and C248 each coordinate [4Fe-4S] cluster.

Belongs to the QueG family. In terms of assembly, monomer. It depends on cob(II)alamin as a cofactor. The cofactor is [4Fe-4S] cluster.

Its subcellular location is the cytoplasm. It catalyses the reaction epoxyqueuosine(34) in tRNA + AH2 = queuosine(34) in tRNA + A + H2O. The protein operates within tRNA modification; tRNA-queuosine biosynthesis. In terms of biological role, catalyzes the conversion of epoxyqueuosine (oQ) to queuosine (Q), which is a hypermodified base found in the wobble positions of tRNA(Asp), tRNA(Asn), tRNA(His) and tRNA(Tyr). This Cyclobacterium marinum (strain ATCC 25205 / DSM 745 / LMG 13164 / NCIMB 1802) (Flectobacillus marinus) protein is Epoxyqueuosine reductase.